Reading from the N-terminus, the 397-residue chain is UDP-galactose translocator (397 aa).

The tract at residues 1-21 is disordered; sequence MAAVGSGGSNAAAGPGAVSAG. 10 helical membrane-spanning segments follow: residues 3 to 23, 37 to 57, 65 to 85, 97 to 117, 140 to 160, 169 to 189, 200 to 220, 238 to 258, 269 to 289, and 315 to 335; these read AVGSGGSNAAAGPGAVSAGSL, YISLAVLVVQNASLILSIRYA, FFATTAVVMAEVLKGLTCLLL, LALFLHEAVLVQYVDTLKLAV, TFQVTYQLKILTTALFSVLML, WASLLLLFTGVAIVQAQQAGG, GAGLAAVVASCLSSGFAGVYF, LGLFGTALGLVGLWWAEGTAV, PAVWGVVLNQAFGGLLVAVVV, and LFGFHVDPLFALGAGLVIGAV. A compositionally biased stretch (low complexity) spans 9 to 21; sequence SNAAAGPGAVSAG. The tract at residues 355 to 397 is disordered; the sequence is ASASTSGPCTHQQPPGQPPPPKLSSHRADLSTEPFLPKSVLVK.

It belongs to the nucleotide-sugar transporter family. SLC35A subfamily. Interacts with SLC35A3; the interaction is reduced in the presence of SLC35A4. Found in a complex with SLC35A3 and SLC35A4.

It localises to the golgi apparatus membrane. The catalysed reaction is UMP(out) + UDP-alpha-D-galactose(in) = UMP(in) + UDP-alpha-D-galactose(out). It catalyses the reaction UDP-N-acetyl-alpha-D-galactosamine(in) + UMP(out) = UDP-N-acetyl-alpha-D-galactosamine(out) + UMP(in). It carries out the reaction UMP(out) + UDP-alpha-D-glucose(in) = UMP(in) + UDP-alpha-D-glucose(out). The enzyme catalyses UMP(out) + UDP-N-acetyl-alpha-D-glucosamine(in) = UMP(in) + UDP-N-acetyl-alpha-D-glucosamine(out). The catalysed reaction is UDP-alpha-D-galactose(in) + AMP(out) = UDP-alpha-D-galactose(out) + AMP(in). It catalyses the reaction UDP-alpha-D-galactose(in) + CMP(out) = UDP-alpha-D-galactose(out) + CMP(in). It carries out the reaction UDP-N-acetyl-alpha-D-galactosamine(out) + UDP-alpha-D-galactose(in) = UDP-N-acetyl-alpha-D-galactosamine(in) + UDP-alpha-D-galactose(out). The enzyme catalyses UDP-N-acetyl-alpha-D-glucosamine(out) + UDP-alpha-D-galactose(in) = UDP-N-acetyl-alpha-D-glucosamine(in) + UDP-alpha-D-galactose(out). The catalysed reaction is UDP-alpha-D-galactose(in) + UDP-alpha-D-glucose(out) = UDP-alpha-D-galactose(out) + UDP-alpha-D-glucose(in). It catalyses the reaction UMP(out) + CMP(in) = UMP(in) + CMP(out). It carries out the reaction UMP(out) + AMP(in) = UMP(in) + AMP(out). Its function is as follows. Transports uridine diphosphate galactose (UDP-galactose) from the cytosol into the Golgi apparatus, functioning as an antiporter that exchanges UDP-galactose for UMP. It is also able to exchange UDP-galactose for AMP and CMP, and to transport UDP-N-acetylgalactosamine (UDP-GalNAc) and other nucleotide sugars. As a provider of UDP-galactose to galactosyltransferases present in the Golgi apparatus, it is necessary for globotriaosylceramide/globoside (Gb3Cer) synthesis from lactosylceramide. The protein is UDP-galactose translocator of Canis lupus familiaris (Dog).